The chain runs to 294 residues: MPHLFEGVGVALATPFTNNEVDYNALEKHVDFLLDNGVKAIIVNGTTAESPTLTEEEKEQVLESVIKQVNHRVTIIAGTGTNNTAKSIQASQRAKALGADAIMLITPYYNKTNQRGLVKHFETIANEVELPVVLYNVPSRTNMTIEPETVETLSHNQYIVAIKDATNDFEYYEDVKSRINQEEFALYSGNDDNVVEFYQRGGNGVISVIANAIPKEFQALYDAKQSGQDISNDFEPISKLLDALSVDVNPIPIKALTSHLGFGNYELRLPLLPLEDADAKVLINVFEQFKAGEL.

T47 lines the pyruvate pocket. Y135 serves as the catalytic Proton donor/acceptor. K163 (schiff-base intermediate with substrate) is an active-site residue. Position 206 (I206) interacts with pyruvate.

It belongs to the DapA family. Homodimer.

It is found in the cytoplasm. The enzyme catalyses L-aspartate 4-semialdehyde + pyruvate = (2S,4S)-4-hydroxy-2,3,4,5-tetrahydrodipicolinate + H2O + H(+). It functions in the pathway amino-acid biosynthesis; L-lysine biosynthesis via DAP pathway; (S)-tetrahydrodipicolinate from L-aspartate: step 3/4. Its function is as follows. Catalyzes the condensation of (S)-aspartate-beta-semialdehyde [(S)-ASA] and pyruvate to 4-hydroxy-tetrahydrodipicolinate (HTPA). The polypeptide is 4-hydroxy-tetrahydrodipicolinate synthase (Staphylococcus haemolyticus (strain JCSC1435)).